The following is a 247-amino-acid chain: ATP synthase subunit a (247 aa).

6 helical membrane-spanning segments follow: residues 24–44, 82–102, 112–132, 141–161, 181–201, and 206–226; these read IAFT…AAMM, FFPL…VGII, IIVT…YGFY, LFVP…IEII, GHVT…LGFV, and ALLP…VAFL.

It belongs to the ATPase A chain family. F-type ATPases have 2 components, CF(1) - the catalytic core - and CF(0) - the membrane proton channel. CF(1) has five subunits: alpha(3), beta(3), gamma(1), delta(1), epsilon(1). CF(0) has four main subunits: a, b, b' and c.

The protein resides in the cell inner membrane. In terms of biological role, key component of the proton channel; it plays a direct role in the translocation of protons across the membrane. The protein is ATP synthase subunit a of Bradyrhizobium sp. (strain ORS 278).